A 66-amino-acid chain; its full sequence is Large ribosomal subunit protein bL33c (66 aa).

This sequence belongs to the bacterial ribosomal protein bL33 family.

It localises to the plastid. The protein resides in the chloroplast. The protein is Large ribosomal subunit protein bL33c of Daucus carota (Wild carrot).